Reading from the N-terminus, the 141-residue chain is Nucleoside diphosphate kinase (141 aa).

6 residues coordinate ATP: Lys10, Phe58, Arg86, Thr92, Arg103, and Asn113. Catalysis depends on His116, which acts as the Pros-phosphohistidine intermediate.

It belongs to the NDK family. As to quaternary structure, homotetramer. The cofactor is Mg(2+).

The protein resides in the cytoplasm. The catalysed reaction is a 2'-deoxyribonucleoside 5'-diphosphate + ATP = a 2'-deoxyribonucleoside 5'-triphosphate + ADP. It catalyses the reaction a ribonucleoside 5'-diphosphate + ATP = a ribonucleoside 5'-triphosphate + ADP. Its function is as follows. Major role in the synthesis of nucleoside triphosphates other than ATP. The ATP gamma phosphate is transferred to the NDP beta phosphate via a ping-pong mechanism, using a phosphorylated active-site intermediate. In Ehrlichia canis (strain Jake), this protein is Nucleoside diphosphate kinase.